A 365-amino-acid chain; its full sequence is Membrane-bound lytic murein transglycosylase C (365 aa).

The N-terminal stretch at 1–19 (MKKYTKYLPLLLIIPFLAA) is a signal peptide. Residue Cys-20 is the site of N-palmitoyl cysteine attachment. A lipid anchor (S-diacylglycerol cysteine) is attached at Cys-20.

Belongs to the transglycosylase Slt family.

The protein localises to the cell outer membrane. It carries out the reaction Exolytic cleavage of the (1-&gt;4)-beta-glycosidic linkage between N-acetylmuramic acid (MurNAc) and N-acetylglucosamine (GlcNAc) residues in peptidoglycan, from either the reducing or the non-reducing ends of the peptidoglycan chains, with concomitant formation of a 1,6-anhydrobond in the MurNAc residue.. Murein-degrading enzyme. May play a role in recycling of muropeptides during cell elongation and/or cell division. In Actinobacillus pleuropneumoniae serotype 5b (strain L20), this protein is Membrane-bound lytic murein transglycosylase C.